We begin with the raw amino-acid sequence, 2300 residues long: Adenylate cyclase (2300 aa).

Composition is skewed to polar residues over residues 1 to 21 (MTRNDGGSRYSSIDSAQSSIT) and 28 to 41 (TPTSSLGSSMTRPL). Disordered regions lie at residues 1-256 (MTRN…GSFL), 272-593 (GIRP…DLTR), and 631-652 (TKLFTSKKSSSAKQPQDDMDED). 2 stretches are compositionally biased toward low complexity: residues 42–61 (SPSLQAGSSSSNGGHNVSRS) and 92–152 (SSQS…QVSP). A compositionally biased stretch (polar residues) spans 153–169 (TGGSRLTQSPTTPSNAS). Residues 170–185 (IREHRMSELGGYRREM) are compositionally biased toward basic and acidic residues. Residues 204 to 221 (QQQPQQPQQQQQQQQQQQ) are compositionally biased toward low complexity. Positions 228 to 237 (VSGTFSNLSQ) are enriched in polar residues. Residues 303-313 (SIASITTTASS) are compositionally biased toward low complexity. Residues 333-344 (GDRDDWPGRDSS) are compositionally biased toward basic and acidic residues. The span at 345-357 (EISLPQPSHSGPM) shows a compositional bias: polar residues. The segment covering 410 to 421 (PSRPRTPVPAPE) has biased composition (pro residues). Polar residues predominate over residues 455 to 469 (DSSQNPPKTSSSARS). A compositionally biased stretch (basic and acidic residues) spans 484–501 (KSNEDPRALKPSLSREDS). Residues 511 to 550 (NGSSSMMGTRSRAQSPAPSWTGTSRGLKANSISDGTSSPA) show a composition bias toward polar residues. The span at 552–565 (SHKKGILGRFRRHN) shows a compositional bias: basic residues. A compositionally biased stretch (low complexity) spans 631–643 (TKLFTSKKSSSAK). Residues 749–841 (SNYYIRVFRS…IDEIGREDNS (93 aa)) form the Ras-associating domain. LRR repeat units follow at residues 867-890 (NQKLNHVDLSGRNLITIPVPLYRK), 892-914 (AEIVSLNLSRNLSLDVPRDFIQA), 915-938 (CTALRDIKYNNNEAQALPKSFATA), 939-961 (SKLTYLDVSNNRLQDLDHSELSK), 962-986 (LTGLLKLNLANNCLRSLPPTLGAYK), 988-1008 (LRTLNISSNFLDVFPSFICEL), 1009-1031 (ETIVDLDLSFNSINNLPDNLMKL), 1033-1055 (NLEKFVITNNRLSGPISESVRDL), 1056-1079 (VSLRELDIRYNQISTIDVLSDLPR), 1081-1097 (EILSADHNQISKFSGSF), 1098-1119 (ERLRSLKLNSNPIVKFEVKAPV), 1120-1142 (PTLKILNLSNAQLASIDESIDNL), 1143-1165 (MNLERLILDSNYFVSLPNQIGNL), 1166-1188 (KKLDHLSMANNHLGELPPEIGCL), 1189-1211 (TELRTLDVHGNNMRKLPNEIWWA), and 1213-1234 (KLEHLNASSNILTEFPKPASRA). Residues 1228–1336 (PKPASRAPQA…VITPSNGPRK (109 aa)) form a disordered region. Over residues 1253–1263 (ANKNGLLSRTP) the composition is skewed to polar residues. Positions 1313–1327 (TSVVSRSTTQSSTGV) are enriched in low complexity. LRR repeat units follow at residues 1349–1369 (SGSLKNLYLADNQLDDDVFEE), 1373–1396 (LPELRVLNLSCNDLSDMPQGTIRS), 1398–1420 (PQLVELYLSGNELTSLPAEDFLE), 1422–1445 (HCLLQTLHINGNKFINLPAEISRA), 1447–1469 (KLQVLDCSSNNLKYNVTNVPYDW), and 1474–1497 (NRDLRYLNLSGNKRLEIKNNYRQP). Positions 1552-1828 (PYGMADTLGK…NKLLIMMIGV (277 aa)) constitute a PPM-type phosphatase domain. The interval 1847 to 1867 (FSMPQDDPSHVPPSGNKRRKV) is disordered. Positions 1892–2029 (SIVFTDIKNS…PMVNKASRIS (138 aa)) constitute a Guanylate cyclase domain. 2 residues coordinate Mg(2+): D1897 and D1940. Residues 2272–2300 (LDQAETDDATDNNSSGDVDTLDGSDTEQE) form a disordered region. Acidic residues predominate over residues 2290 to 2300 (DTLDGSDTEQE).

Belongs to the adenylyl cyclase class-4/guanylyl cyclase family. Mg(2+) serves as cofactor.

It carries out the reaction ATP = 3',5'-cyclic AMP + diphosphate. Its function is as follows. Plays essential roles in regulation of cellular metabolism by catalyzing the synthesis of a second messenger, cAMP. The protein is Adenylate cyclase (cr-1) of Neurospora crassa (strain ATCC 24698 / 74-OR23-1A / CBS 708.71 / DSM 1257 / FGSC 987).